The sequence spans 220 residues: Ribosomal RNA large subunit methyltransferase E (220 aa).

S-adenosyl-L-methionine is bound by residues G60, W62, D92, D108, and D133. K173 functions as the Proton acceptor in the catalytic mechanism. Residues 197–220 (RKPKASRDKSSETFILGRQLKQPR) are disordered.

This sequence belongs to the class I-like SAM-binding methyltransferase superfamily. RNA methyltransferase RlmE family.

Its subcellular location is the cytoplasm. It carries out the reaction uridine(2552) in 23S rRNA + S-adenosyl-L-methionine = 2'-O-methyluridine(2552) in 23S rRNA + S-adenosyl-L-homocysteine + H(+). Functionally, specifically methylates the uridine in position 2552 of 23S rRNA at the 2'-O position of the ribose in the fully assembled 50S ribosomal subunit. This Burkholderia ambifaria (strain MC40-6) protein is Ribosomal RNA large subunit methyltransferase E.